The following is a 418-amino-acid chain: Serine protease inhibitor A3K (418 aa).

The first 21 residues, 1-21 (MAFIVAMGMILMAGICPAVLC), serve as a signal peptide directing secretion. 4 N-linked (GlcNAc...) asparagine glycosylation sites follow: Asn-39, Asn-105, Asn-185, and Asn-270. The segment at 369–394 (GTEAAAATGVIGGIRKAILPAVHFNR) is RCL.

This sequence belongs to the serpin family. As to expression, expressed in liver and secreted in plasma.

The protein localises to the secreted. Functionally, contrapsin inhibits trypsin-like proteases. The sequence is that of Serine protease inhibitor A3K (Serpina3k) from Mus musculus (Mouse).